The chain runs to 667 residues: Gamma-tubulin complex component 4 (667 aa).

Positions 424 to 446 (DHKADATQPREVPSRETSPREAP) are disordered.

Belongs to the TUBGCP family. Component of the gamma-tubulin ring complex (gTuRC) consisting of TUBGCP2, TUBGCP3, TUBGCP4, TUBGCP5 and TUBGCP6 and gamma-tubulin TUBG1 or TUBG2. TUBGCP2, TUBGCP3, TUBGCP4, TUBGCP5 and TUBGCP6 assemble in a 5:5:2:1:1 stoichiometry; each is associated with a gamma-tubulin, thereby arranging 14 gamma-tubulins in a helical manner. Gamma-tubulin at the first position is blocked by TUBGCP3 at the last position, allowing 13 protafilaments to grow into a microtubule. The gTuRC (via TUBGCP3 and TUBGCP6) interacts with ACTB and MZT1; the interactions form a luminal bridge that stabilizes the initial structure during complex assembly. The gTuRC (via TUBGCP2) interacts with MZT2A/MZT2B and CDK5RAP2 (via CM1 motif); the interactions play a role in gTuRC activation. Interacts with NINL. Interacts with ATF5; the ATF5:PCNT:polyglutamylated tubulin (PGT) tripartite unites the mother centriole and the pericentriolar material (PCM) in the centrosome.

The protein localises to the cytoplasm. The protein resides in the cytoskeleton. Its subcellular location is the microtubule organizing center. It is found in the centrosome. Component of the gamma-tubulin ring complex (gTuRC) which mediates microtubule nucleation. The gTuRC regulates the minus-end nucleation of alpha-beta tubulin heterodimers that grow into microtubule protafilaments, a critical step in centrosome duplication and spindle formation. The protein is Gamma-tubulin complex component 4 (Tubgcp4) of Mus musculus (Mouse).